Here is a 147-residue protein sequence, read N- to C-terminus: 3-dehydroquinate dehydratase (147 aa).

Residue Y23 is the Proton acceptor of the active site. Substrate-binding residues include N74, H80, and D87. The active-site Proton donor is the H100. Substrate contacts are provided by residues 101–102 (LS) and R111.

It belongs to the type-II 3-dehydroquinase family. In terms of assembly, homododecamer.

The catalysed reaction is 3-dehydroquinate = 3-dehydroshikimate + H2O. It participates in metabolic intermediate biosynthesis; chorismate biosynthesis; chorismate from D-erythrose 4-phosphate and phosphoenolpyruvate: step 3/7. Functionally, catalyzes a trans-dehydration via an enolate intermediate. This is 3-dehydroquinate dehydratase from Clostridium botulinum (strain 657 / Type Ba4).